The sequence spans 440 residues: Thymidine phosphorylase (440 aa).

Belongs to the thymidine/pyrimidine-nucleoside phosphorylase family. As to quaternary structure, homodimer.

It carries out the reaction thymidine + phosphate = 2-deoxy-alpha-D-ribose 1-phosphate + thymine. Its pathway is pyrimidine metabolism; dTMP biosynthesis via salvage pathway; dTMP from thymine: step 1/2. Functionally, the enzymes which catalyze the reversible phosphorolysis of pyrimidine nucleosides are involved in the degradation of these compounds and in their utilization as carbon and energy sources, or in the rescue of pyrimidine bases for nucleotide synthesis. The polypeptide is Thymidine phosphorylase (Burkholderia pseudomallei (strain K96243)).